The primary structure comprises 441 residues: MKIFNKLIFLIIQCILIISVTNAQVDCGGTDNPYPIYNELPVLINQTTYGKLYKIGPPDNLINIIELYGTPYQRGLAQGQLLKSEINDIFDNFFGYITVMVNELVTKYADYLPKFLVDALEEGGVGLALDITADLTKKYTPKSFFEEMQGIADGSGIEYKTILRLHMFPELIKAACSMVGAYNSATLNKGLLQLRALDFGFDPMNPLRLHPTVMIYHPESVSAGGDGGHEFATLSWAGFLGTLTGYSQHVGICEKYWFGYNGTSSREGIPFHFLLREIIQFDESIDEALNRIINADRTCSVFMGLGSNQTNTFKAVEYSYEYVRVFDDQTPFPSYVPTPSAHPVIQDVVYIDKFVQPSNHQCLASVLQKSLGSIDVTSLINAAAQLQTGDIHIGIYDYQQNQMYVSVGTQSGPYPPPSNFTIVPAYARQFIQIDLNSFFNQ.

The first 23 residues, 1–23 (MKIFNKLIFLIIQCILIISVTNA), serve as a signal peptide directing secretion. 4 N-linked (GlcNAc...) asparagine glycosylation sites follow: Asn-45, Asn-261, Asn-308, and Asn-419.

The protein localises to the secreted. The sequence is that of Protein dcd1A (dcd1A) from Dictyostelium discoideum (Social amoeba).